The chain runs to 373 residues: Plasmepsin VIII (373 aa).

The N-terminal stretch at 1-21 is a signal peptide; that stretch reads MNKFFVFPLLLILNSIVLVKS. The region spanning 50 to 370 is the Peptidase A1 domain; it reads FIGEISIGNP…EKDNMRIGLA (321 aa). Residues Asp-68 and Asp-258 contribute to the active site.

The protein belongs to the peptidase A1 family.

Functionally, during the development in the mosquito vector, plays an essential role in sporozoite egress from the oocyst and sporozoite gliding motility, which is required for the invasion of salivary glands and subsequent transmission to the host. This is Plasmepsin VIII from Plasmodium berghei (strain Anka).